The chain runs to 182 residues: MDLSSLRPAKGAVKNKKRIGRGPGSGNGTTAGKGNKGQQSRSGYTRPVSEGGQMPIYRRLPKFGFTKPNRKNVIPVNLSQIALWMENGKATSEITVENLKSLCSARRADYFKILGNGELKSPVTITAHFVSKSAQEKILQAGGTITLAERTLLEAERIKDTPVEEGLMKPKARLRKKKKIKS.

The disordered stretch occupies residues 1-52 (MDLSSLRPAKGAVKNKKRIGRGPGSGNGTTAGKGNKGQQSRSGYTRPVSEGG). The segment covering 21 to 35 (RGPGSGNGTTAGKGN) has biased composition (gly residues).

The protein belongs to the universal ribosomal protein uL15 family. As to quaternary structure, part of the 50S ribosomal subunit.

In terms of biological role, binds to the 23S rRNA. The protein is Large ribosomal subunit protein uL15 of Chlorobium phaeobacteroides (strain BS1).